The sequence spans 71 residues: Small ribosomal subunit protein bS21 (71 aa).

It belongs to the bacterial ribosomal protein bS21 family.

This chain is Small ribosomal subunit protein bS21, found in Psychromonas ingrahamii (strain DSM 17664 / CCUG 51855 / 37).